A 2314-amino-acid chain; its full sequence is A-kinase anchor protein 6 (2314 aa).

The segment covering Met-1–Arg-12 has biased composition (polar residues). Disordered stretches follow at residues Met-1 to Pro-25, Pro-285 to Asp-432, Ser-505 to Ala-613, and Thr-736 to Thr-755. A compositionally biased stretch (basic and acidic residues) spans Ser-301–Asp-311. Positions Gln-319–Asp-330 are enriched in polar residues. Residues Glu-398–Leu-420 show a composition bias toward basic and acidic residues. Positions Ser-569–Ser-592 are enriched in low complexity. Basic and acidic residues predominate over residues Thr-736 to Ser-753. 2 Spectrin repeats span residues Gln-768–Glu-847 and Ile-1033–Asp-1148. Ser-1072 carries the phosphoserine modification. The interval Cys-1349–Gly-1401 is disordered. Positions Asp-1353–Gly-1363 are enriched in polar residues. Phosphoserine is present on residues Ser-1568 and Ser-1593. Basic and acidic residues-rich tracts occupy residues Arg-1816–Gly-1831 and Gly-1874–Asp-1891. 3 disordered regions span residues Arg-1816–Ser-1838, Leu-1854–Ser-1926, and Ser-1940–Arg-2012. The span at Asn-1917–Ser-1926 shows a compositional bias: polar residues. The segment covering Ser-1944–Pro-1958 has biased composition (basic and acidic residues). Positions Ile-2062–Gln-2075 are PKA-RII subunit binding domain. Residues Glu-2166–Ala-2286 are disordered. Residues Gly-2215 to Ser-2226 are compositionally biased toward basic and acidic residues. A compositionally biased stretch (polar residues) spans His-2227 to Gly-2243.

Interacts with RII subunit of PKA, phosphatase 2B (calcineurin) and AKAP79. Interacts with SYNPO2.

It localises to the sarcoplasmic reticulum. The protein localises to the nucleus membrane. Functionally, binds to type II regulatory subunits of protein kinase A and anchors/targets them to the nuclear membrane or sarcoplasmic reticulum. May act as an adapter for assembling multiprotein complexes. The protein is A-kinase anchor protein 6 (Akap6) of Rattus norvegicus (Rat).